Consider the following 125-residue polypeptide: Cytochrome c oxidase assembly factor 6 homolog (125 aa).

The residue at position 2 (glycine 2) is an N-acetylalanine. The CHCH domain maps to 55–98; it reads RQVCWGARDEYWKCLDENLEDASQCKKLRSSFESSCPQQWIKYF. Positions 58 to 68 match the Cx9C motif motif; the sequence is CWGARDEYWKC. 2 disulfide bridges follow: cysteine 58–cysteine 90 and cysteine 68–cysteine 79. A Cx10C motif motif is present at residues 79 to 90; it reads CKKLRSSFESSC.

This sequence belongs to the cytochrome c oxidase subunit 6B family. As to quaternary structure, interacts with COA1. Found in a complex with TMEM177, COX20, MT-CO2/COX2, COX18, SCO1 and SCO2. Interacts with MT-CO2/COX2 and SCO2. Interacts with SCO1. Interacts with COX20 in a MT-CO2/COX2- and COX18-dependent manner. Interacts with COX16.

Its subcellular location is the mitochondrion intermembrane space. Its function is as follows. Involved in the maturation of the mitochondrial respiratory chain complex IV subunit MT-CO2/COX2. Thereby, may regulate early steps of complex IV assembly. Mitochondrial respiratory chain complex IV or cytochrome c oxidase is the component of the respiratory chain that catalyzes the transfer of electrons from intermembrane space cytochrome c to molecular oxygen in the matrix and as a consequence contributes to the proton gradient involved in mitochondrial ATP synthesis. May also be required for efficient formation of respiratory supercomplexes comprised of complexes III and IV. This Homo sapiens (Human) protein is Cytochrome c oxidase assembly factor 6 homolog (COA6).